Consider the following 629-residue polypeptide: MAVRLMKQCTCLLREATRLVPTVAPVGRLRLAGVACKTLTSSVSSPSSGSLTELLGKEQVFTPYPEHQEVDYLIEKATRPEELLELLGGDHSLHHNHAALILIRLSYLLSEKPKEKALLVEDARFQQLVRLVDSQITSVWHGTLVKLLRSLYTLVLPQGSKELRSVEQEVRWRLRRLKYKHLVFLAESCAPFMKEQHSKELLAELLRHLERRWTEISDSRTLVSMMTMAGHLSESLMNRLEDKCLELVEQFGPDELRKVLMTLAAQSRRSVPLLRAISYHLVQKPFPMTKGMLLDLAYAYGKLSFHQTQVAQRLAADLLPFIPSMTPGEVARCAKSFAFLKWLNLPLFEAFTQHLLNSAQDVSLSHLCSVLLAFARLNFHPEQEDQFFNLVHEKLDSVLGSLEPALQVDLVWALCVLQQVQVAELQTVLHPGLHTRFLESKSPKDQSTFQKLVHINSTALLEYPEYKGPFLPASAVAPSPSPSNKKMTPLQKELQDALKALLGNNDTGSLEVATQYGWVLDAEVLLDAEGHFLPLRDFVAPHLAQPVGNQPLPPGAKRIAFLRWEFPNFNSRSKDLLGRFVLARRHVLAAGFLVVDVPYYEWLDLKSEWQKTAYLKDKMRKAVAEELAK.

The region spanning 559-617 (IAFLRWEFPNFNSRSKDLLGRFVLARRHVLAAGFLVVDVPYYEWLDLKSEWQKTAYLKD) is the RAP domain.

This sequence belongs to the FAST kinase family.

The protein localises to the mitochondrion matrix. Plays a role in processing of mitochondrial RNA precursors and in stabilization of a subset of mature mitochondrial RNA species, such as MT-CO1, MT-CO2, MT-CYB, MT-CO3, MT-ND3, MT-ND5 and MT-ATP8/6. May play a role in cell cycle progression. In Rattus norvegicus (Rat), this protein is FAST kinase domain-containing protein 4 (Tbrg4).